A 430-amino-acid chain; its full sequence is MAEAVLIDLSGLQLNAQKNCHETLLETLDGIHYHHAPKAKFLCIICCRNASKEKDGEYGLCELEAGNGFSRLAGKFETVSHPCLAASLYTIKQKIDEENLSCIKVIVPEHRKLLMKAYVGQLFTEVYEFEFEDLQGAWRDSLLKPSTGINVTTTQELEDIQHEIETYLRSLPALKGDLTIVTSPLIPDNFLHGFTTRTGGISSVPTLSSLNLFSSSKRRDPKVVVQENVRRLANAAGFNAEKFYRIKTDHASEVWVMGKKEPESYDGIVTNQRGVTITALGADCIPIVFADPVKKACGVAHSGWKGTLLGVAMATVNAMIAEYGCDVEDIIVVLGPSVGSCCFTLPKESAVSFHSLHPSCVRHFDSPRPYVDIRKATRILLERGGILPQNIQDQKEDLDLCTSCHPEKFFSHVRDGLNFGTQIGFISLRE.

Lysine 247 carries the post-translational modification N6-acetyllysine. Histidine 250, cysteine 284, and histidine 301 together coordinate Zn(2+).

The protein belongs to the purine nucleoside phosphorylase YfiH/LACC1 family. In terms of assembly, interacts with FASN. Interacts with SDHA. Interacts with ATF6, EIF2AK3 and ERN1. In terms of processing, phosphorylated on tyrosine residues. In terms of tissue distribution, predominantly expressed in myeloid cells. Highly expressed in primary macrophages and dendritic cells sorted from the peritoneum or spleen, respectively (at protein level).

Its subcellular location is the cytoplasm. It localises to the nucleus. It is found in the endoplasmic reticulum. The protein resides in the peroxisome. It carries out the reaction adenosine + phosphate = alpha-D-ribose 1-phosphate + adenine. It catalyses the reaction inosine + phosphate = alpha-D-ribose 1-phosphate + hypoxanthine. The catalysed reaction is guanosine + phosphate = alpha-D-ribose 1-phosphate + guanine. The enzyme catalyses S-methyl-5'-thioadenosine + phosphate = 5-(methylsulfanyl)-alpha-D-ribose 1-phosphate + adenine. It carries out the reaction adenosine + H2O + H(+) = inosine + NH4(+). In terms of biological role, purine nucleoside enzyme that catalyzes the phosphorolysis of adenosine, guanosine and inosine nucleosides, yielding D-ribose 1-phosphate and the respective free bases, adenine, guanine and hypoxanthine. Also catalyzes the phosphorolysis of S-methyl-5'-thioadenosine into adenine and S-methyl-5-thio-alpha-D-ribose 1-phosphate. Also has adenosine deaminase activity. Acts as a regulator of innate immunity in macrophages by modulating the purine nucleotide metabolism, thereby regulating the metabolic function and bioenergetic state of macrophages. Enables a purine nucleotide cycle between adenosine and inosine monophosphate and adenylosuccinate that prevents cytoplasmic acidification and balances the cytoplasmic-mitochondrial redox interface. The purine nucleotide cycle consumes aspartate and releases fumarate in a manner involving fatty acid oxidation and ATP-citrate lyase activity. Participates in pattern recognition receptor-induced cytokines in macrophages: associates with the NOD2-signaling complex and promotes optimal NOD2-induced signaling, cytokine secretion and bacterial clearance. Localizes to the endoplasmic reticulum upon PRR stimulation of macrophages and associates with endoplasmic reticulum-stress sensors, promoting the endoplasmic reticulum unfolded protein response (UPR). Does not show laccase activity. The sequence is that of Purine nucleoside phosphorylase LACC1 from Mus musculus (Mouse).